Here is a 132-residue protein sequence, read N- to C-terminus: ATP synthase epsilon chain (132 aa).

This sequence belongs to the ATPase epsilon chain family. As to quaternary structure, F-type ATPases have 2 components, CF(1) - the catalytic core - and CF(0) - the membrane proton channel. CF(1) has five subunits: alpha(3), beta(3), gamma(1), delta(1), epsilon(1). CF(0) has three main subunits: a, b and c.

The protein resides in the cell membrane. Produces ATP from ADP in the presence of a proton gradient across the membrane. The polypeptide is ATP synthase epsilon chain (Clostridium kluyveri (strain NBRC 12016)).